The sequence spans 376 residues: Methionine import ATP-binding protein MetN 2 (376 aa).

Residues 1–25 are disordered; sequence MTATAQRQRPIDTTGAGQRAQQAEL. In terms of domain architecture, ABC transporter spans 34 to 273; sequence VRFINLGKTY…PQHEVSKTLL (240 aa). 70–77 serves as a coordination point for ATP; it reads GRSGAGKS.

Belongs to the ABC transporter superfamily. Methionine importer (TC 3.A.1.24) family. As to quaternary structure, the complex is composed of two ATP-binding proteins (MetN), two transmembrane proteins (MetI) and a solute-binding protein (MetQ).

It localises to the cell inner membrane. The enzyme catalyses L-methionine(out) + ATP + H2O = L-methionine(in) + ADP + phosphate + H(+). It catalyses the reaction D-methionine(out) + ATP + H2O = D-methionine(in) + ADP + phosphate + H(+). Part of the ABC transporter complex MetNIQ involved in methionine import. Responsible for energy coupling to the transport system. The protein is Methionine import ATP-binding protein MetN 2 of Pseudomonas syringae pv. syringae (strain B728a).